The following is a 107-amino-acid chain: uncharacterized protein (107 aa).

This is an uncharacterized protein from Yersinia pseudotuberculosis serotype I (strain IP32953).